The primary structure comprises 61 residues: MLNIFSLICICLHSTLYSSSFFLAKLPEAYAFLNPIVDFMPVIPLLFFLLAFVWQAAVSFR.

The propeptide occupies 1–24 (MLNIFSLICICLHSTLYSSSFFLA). A helical transmembrane segment spans residues 36-56 (IVDFMPVIPLLFFLLAFVWQA).

It belongs to the PsbK family. In terms of assembly, PSII is composed of 1 copy each of membrane proteins PsbA, PsbB, PsbC, PsbD, PsbE, PsbF, PsbH, PsbI, PsbJ, PsbK, PsbL, PsbM, PsbT, PsbX, PsbY, PsbZ, Psb30/Ycf12, at least 3 peripheral proteins of the oxygen-evolving complex and a large number of cofactors. It forms dimeric complexes.

Its subcellular location is the plastid. It localises to the chloroplast thylakoid membrane. Its function is as follows. One of the components of the core complex of photosystem II (PSII). PSII is a light-driven water:plastoquinone oxidoreductase that uses light energy to abstract electrons from H(2)O, generating O(2) and a proton gradient subsequently used for ATP formation. It consists of a core antenna complex that captures photons, and an electron transfer chain that converts photonic excitation into a charge separation. The sequence is that of Photosystem II reaction center protein K from Eucalyptus globulus subsp. globulus (Tasmanian blue gum).